An 855-amino-acid polypeptide reads, in one-letter code: Serine/threonine-protein kinase HAL5 (855 aa).

Disordered stretches follow at residues 1–166 (MGDE…VERQ) and 214–261 (RRNS…GNGT). Phosphoserine occurs at positions 17 and 19. Residues 31–45 (ISGSNNAAAPSSRPG) show a composition bias toward polar residues. Positions 57–74 (IITSNVSSPSISPVHSPV) are enriched in low complexity. Phosphoserine occurs at positions 68 and 72. The segment covering 94–114 (LSPSREPSLNSENEMFSQESF) has biased composition (polar residues). Basic and acidic residues predominate over residues 125-139 (LLEREDLQNKKEEKA). Position 160 is a phosphoserine (Ser160). The span at 248-258 (GMNSNATNNVG) shows a compositional bias: low complexity. A phosphoserine mark is found at Ser273, Ser277, Ser324, Ser333, Ser336, Ser358, Ser391, and Ser395. The disordered stretch occupies residues 319–347 (NKNVDSGDEKDADASVNSGDDGDNDSEAN). Disordered regions lie at residues 401–427 (SQTVKKSRTSNLKNGNNDELMKNDGKN) and 457–497 (LKSE…SHKP). The segment covering 462–474 (TKGNNGEGRSNSN) has biased composition (polar residues). One can recognise a Protein kinase domain in the interval 503-837 (GKYIGVVGAG…IEQLLQSSWM (335 aa)). Residues 509–517 (VGAGAYGVV) and Lys546 contribute to the ATP site. Asp688 (proton acceptor) is an active-site residue.

This sequence belongs to the protein kinase superfamily. CAMK Ser/Thr protein kinase family. NPR/HAL subfamily. HAL5 sub-subfamily.

The catalysed reaction is L-seryl-[protein] + ATP = O-phospho-L-seryl-[protein] + ADP + H(+). It carries out the reaction L-threonyl-[protein] + ATP = O-phospho-L-threonyl-[protein] + ADP + H(+). Functionally, protein kinase involved in salt tolerance and pH sensitivity, probably by regulating plasma membrane potential and cation influx. Positively controls the TRK1-TRK2 potassium transport system in response to potassium starvation. Stabilizes TRK1 in the plasma membrane by preventing its vacuolar sorting and degradation. Also stabilizes other plasma membrane nutrient transporters like CAN1, FUR4 and HXT1. May itself be subject to regulation by ARL1. In Saccharomyces cerevisiae (strain YJM789) (Baker's yeast), this protein is Serine/threonine-protein kinase HAL5 (HAL5).